The primary structure comprises 464 residues: L-cystine uptake protein TcyP (464 aa).

The next 10 membrane-spanning stretches (helical) occupy residues 3–23 (TLLV…LYYM), 34–54 (VFTA…IYEP), 73–93 (YVKL…ISAF), 107–127 (GLII…GIAA), 184–204 (PTST…FIGV), 225–245 (IVMR…LALM), 263–283 (FVLA…LLIA), 347–367 (AGIY…IDPL), 371–391 (FILT…GVGG), and 395–415 (FAAL…ALVI).

Belongs to the dicarboxylate/amino acid:cation symporter (DAACS) (TC 2.A.23) family.

The protein localises to the membrane. In terms of biological role, mediates uptake of L-cystine, the oxidized form of L-cysteine. The protein is L-cystine uptake protein TcyP of Bacillus cereus (strain ATCC 14579 / DSM 31 / CCUG 7414 / JCM 2152 / NBRC 15305 / NCIMB 9373 / NCTC 2599 / NRRL B-3711).